Consider the following 379-residue polypeptide: MKGDKRRDIRDILLHDETLFRNMNAFDPDYVPENYRYRESQMEALAVCIRPALRNGRPVNAVILGSCATGKTTAIKKIFEMVESTSEGVVCCYINCQLHTTRFGIFSQIYSKIFGHQPPETGVPFSRIYQTIMQHLASEKRALVVALDDINHLFYSKNANKVLYDILRAHEVFEGVRTGVFAVLSDIEFRYALDKNVDSIFIPQEIVFPPYTREEVFNILRDRVRVGFYPGVISDELLERITDHTMDTGDLRYGIDLLRVCGNLAEADASPVIGEEHLERALKSTGPVNLIHTVRTLNENEREFLRILADAGEDMTAGALYELFRESTGSSYSSFNRIIEKLEFLRLIDTRLTGKGVRGNSRILIPRFSREDLRRCPGF.

Residues 69–73 (TGKTT), Y211, and R223 each bind ATP.

This sequence belongs to the CDC6/cdc18 family. Interacts with MCM. Autophosphorylated on a serine. Phosphorylation is inhibited by binding to MCM. Both single-stranded DNA and double-stranded DNA inhibit the phosphorylation reaction.

Its function is as follows. Involved in regulation of DNA replication. Dissociates the MCM complex and inhibits the MCM helicase activity, suggesting that it may function as a helicase loader. Binds to both specific and random double-stranded or single-stranded DNA. This is ORC1-type DNA replication protein 2 (cdc6-2) from Methanothermobacter thermautotrophicus (strain ATCC 29096 / DSM 1053 / JCM 10044 / NBRC 100330 / Delta H) (Methanobacterium thermoautotrophicum).